The primary structure comprises 506 residues: Cobyric acid synthase (506 aa).

The 198-residue stretch at 251-448 folds into the GATase cobBQ-type domain; sequence DITIAIVQLP…LHGLFDSDAF (198 aa). The active-site Nucleophile is the cysteine 332. Histidine 440 is an active-site residue.

This sequence belongs to the CobB/CobQ family. CobQ subfamily.

Its pathway is cofactor biosynthesis; adenosylcobalamin biosynthesis. In terms of biological role, catalyzes amidations at positions B, D, E, and G on adenosylcobyrinic A,C-diamide. NH(2) groups are provided by glutamine, and one molecule of ATP is hydrogenolyzed for each amidation. This chain is Cobyric acid synthase, found in Salmonella agona (strain SL483).